A 507-amino-acid chain; its full sequence is Dihydrolipoyl dehydrogenase 2, mitochondrial (507 aa).

The N-terminal 36 residues, 1–36, are a transit peptide targeting the mitochondrion; sequence MAMASLARRKAYFLTRNISNSPTDAFRFSFSLTRGF. FAD-binding positions include 73–82, Lys-91, Gly-155, and 184–186; these read EKRGALGGTC and TGS. Cys-82 and Cys-87 are joined by a disulfide. Residues 221-228, Glu-244, Val-278, and Gly-313 each bind NAD(+); that span reads GAGYIGLE. FAD contacts are provided by residues Asp-354 and 360-363; that span reads MLAH. His-486 (proton acceptor) is an active-site residue.

Belongs to the class-I pyridine nucleotide-disulfide oxidoreductase family. In terms of assembly, homodimer. Part of both the glycine cleavage system composed of four proteins: P, T, L and H and of the pyruvate dehydrogenase complex containing multiple copies of three enzymatic components: pyruvate dehydrogenase (E1), dihydrolipoamide acetyltransferase (E2) and lipoamide dehydrogenase (E3). Requires FAD as cofactor. S-nytrosylated at unknown positions. As to expression, preferentially expressed in roots, flowers and siliques and at a lower level in stems and leaves.

It is found in the mitochondrion matrix. It carries out the reaction N(6)-[(R)-dihydrolipoyl]-L-lysyl-[protein] + NAD(+) = N(6)-[(R)-lipoyl]-L-lysyl-[protein] + NADH + H(+). Lipoamide dehydrogenase is a component of the glycine decarboxylase (GDC) or glycine cleavage system as well as of the alpha-ketoacid dehydrogenase complexes. LPD1 is probably the protein most often associated with the glycine decarboxylase complex while LPD2 is probably incorporated into alpha-ketoacid dehydrogenase complexes. The polypeptide is Dihydrolipoyl dehydrogenase 2, mitochondrial (LPD2) (Arabidopsis thaliana (Mouse-ear cress)).